The following is a 676-amino-acid chain: Beta-galactosidase BgaP (676 aa).

Arg-112 provides a ligand contact to substrate. Cys-116 contributes to the Zn(2+) binding site. Asn-150 contributes to the substrate binding site. Glu-151 functions as the Proton donor in the catalytic mechanism. Positions 156, 158, and 161 each coordinate Zn(2+). The active-site Nucleophile is Glu-308. Substrate is bound by residues Trp-316 and 356–359 (EKYH).

This sequence belongs to the glycosyl hydrolase 42 family. As to quaternary structure, homodimer.

It carries out the reaction Hydrolysis of terminal non-reducing beta-D-galactose residues in beta-D-galactosides.. Its activity is regulated as follows. No activity lost during treatment with 100 mM EDTA after 2 hours, and the addition of 1 mM MgCl(2), 1 mM CaCl(2) or 1 mM MnCl(2) has no effect. However, the enzyme activity is inhibited by Zn(2+), Cu(2+), Ni(2+) and Co(2+) to different extents. Addition of Na(+) or K(+) slightly stimulates the enzyme activity at low concentrations and the optimal concentration is 250 mM. A further increase of their concentration of ions above the optimum value results in a decrease in enzyme activity. The enzyme is still active even in the presence of Na(+) or K(+) at a concentration up to 5 M. In terms of biological role, hydrolyzes lactose, o-nitrophenyl-beta-D-galactopyranoside (ONPG), p-nitrophenyl-beta-D-galactopyranoside (PNPG), 5-bromo-4-chloro-3-indolyl-beta-D-galactopyranoside (X-gal), o-nitrophenyl-beta-D-fucopyranoside, p-nitrophenyl-beta-D-mannoside, o-nitrophenyl-beta-D-glucoside, p-nitrophenyl-beta-D-xyloside, p-nitrophenyl-beta-D-cellobioside, p-nitrophenyl-beta-D-arabinoside, p-nitrophenyl-beta-D-lactoside, p-nitrophenyl-beta-D-galacturonide, p-nitrophenyl-beta-D-glucuronide and p-nitrophenyl-alpha-D-galactoside with highest level of activity with ONPG as substrate, intermediate level of activity with PNPG and lower levels of activity with all other chromogenic nitrophenyl analogs. Able to hydrolyze 34% of milk lactose after 60 minutes at 5 degrees Celsius. This chain is Beta-galactosidase BgaP, found in Planococcus sp. (strain L4).